The following is a 66-amino-acid chain: Large ribosomal subunit protein bL32 (66 aa).

Belongs to the bacterial ribosomal protein bL32 family.

This chain is Large ribosomal subunit protein bL32, found in Rickettsia conorii (strain ATCC VR-613 / Malish 7).